The primary structure comprises 456 residues: Glycine--tRNA ligase (456 aa).

Substrate contacts are provided by Arg-98 and Glu-168. ATP contacts are provided by residues 200–202 (RNE), 210–215 (FRTREF), 285–286 (EL), and 329–332 (GVER). Substrate is bound at residue 215 to 219 (FEQME). 325–329 (EPSVG) serves as a coordination point for substrate.

This sequence belongs to the class-II aminoacyl-tRNA synthetase family. Homodimer.

It is found in the cytoplasm. The enzyme catalyses tRNA(Gly) + glycine + ATP = glycyl-tRNA(Gly) + AMP + diphosphate. Functionally, catalyzes the attachment of glycine to tRNA(Gly). This chain is Glycine--tRNA ligase, found in Mycoplasma capricolum subsp. capricolum (strain California kid / ATCC 27343 / NCTC 10154).